The chain runs to 630 residues: tRNA uridine 5-carboxymethylaminomethyl modification enzyme MnmG (630 aa).

14–19 is an FAD binding site; that stretch reads GGGHAG. An NAD(+)-binding site is contributed by 282 to 296; that stretch reads GTRYCPSIEDKVRKF.

It belongs to the MnmG family. Homodimer. Heterotetramer of two MnmE and two MnmG subunits. The cofactor is FAD.

It localises to the cytoplasm. Its function is as follows. NAD-binding protein involved in the addition of a carboxymethylaminomethyl (cmnm) group at the wobble position (U34) of certain tRNAs, forming tRNA-cmnm(5)s(2)U34. In Treponema pallidum (strain Nichols), this protein is tRNA uridine 5-carboxymethylaminomethyl modification enzyme MnmG.